Consider the following 124-residue polypeptide: Ribonuclease pancreatic (124 aa).

Residues K7 and R10 each contribute to the substrate site. The active-site Proton acceptor is the H12. 4 disulfide bridges follow: C26–C84, C40–C95, C58–C110, and C65–C72. A glycan (N-linked (GlcNAc...) asparagine; partial) is linked at N34. Substrate contacts are provided by residues 41–45, K66, and R85; that span reads KPVBT. Catalysis depends on H119, which acts as the Proton donor.

It belongs to the pancreatic ribonuclease family. In terms of assembly, monomer. Interacts with and forms tight 1:1 complexes with RNH1. Dimerization of two such complexes may occur. Interaction with RNH1 inhibits this protein. In terms of tissue distribution, pancreas.

The protein localises to the secreted. The enzyme catalyses an [RNA] containing cytidine + H2O = an [RNA]-3'-cytidine-3'-phosphate + a 5'-hydroxy-ribonucleotide-3'-[RNA].. The catalysed reaction is an [RNA] containing uridine + H2O = an [RNA]-3'-uridine-3'-phosphate + a 5'-hydroxy-ribonucleotide-3'-[RNA].. In terms of biological role, endonuclease that catalyzes the cleavage of RNA on the 3' side of pyrimidine nucleotides. Acts on single-stranded and double-stranded RNA. In Damaliscus korrigum (Topi), this protein is Ribonuclease pancreatic (RNASE1).